The primary structure comprises 375 residues: Flagellin (375 aa).

It belongs to the bacterial flagellin family.

The protein localises to the secreted. Its subcellular location is the bacterial flagellum. Functionally, flagellin is the subunit protein which polymerizes to form the filaments of bacterial flagella. Flagella are an important component in the invasiveness of B.bacilliformis. The sequence is that of Flagellin from Bartonella bacilliformis.